Here is a 219-residue protein sequence, read N- to C-terminus: Glucagon-2 (219 aa).

The signal sequence occupies residues 1-20 (MKSTCYMIGILLLILQNTYQ). Propeptides lie at residues 21 to 50 (SPVP…LKEV), 84 to 95 (SGGLSRRNADYE), 136 to 140 (NAEIE), 175 to 178 (IRYS), and 213 to 219 (KDLLEEH). Positions 23 to 43 (VPEADGSSRSVKAARNEAVDD) are disordered.

It belongs to the glucagon family.

It localises to the secreted. In terms of biological role, promotes hydrolysis of glycogen and lipids, and raises the blood sugar level. This chain is Glucagon-2 (gcg2), found in Xenopus laevis (African clawed frog).